Reading from the N-terminus, the 203-residue chain is GTP-binding protein rho4 (203 aa).

GTP is bound at residue 21 to 28; that stretch reads GDGGCGKT. The short motif at 43-51 is the Effector region element; it reads YVPTVFENY. 70 to 74 is a binding site for GTP; the sequence is DTAGQ. Cys-200 carries the post-translational modification Cysteine methyl ester. A lipid anchor (S-geranylgeranyl cysteine) is attached at Cys-200. The propeptide at 201 to 203 is removed in mature form; the sequence is VIL.

Belongs to the small GTPase superfamily. Rho family.

It localises to the membrane. Required for cell separation. Involved in the regulation of the septum degradation during cytokinesis and in the organization of F-actin patches and cytoplasmic microtubules. This chain is GTP-binding protein rho4 (rho4), found in Schizosaccharomyces pombe (strain 972 / ATCC 24843) (Fission yeast).